The following is a 694-amino-acid chain: Methionine--tRNA ligase (694 aa).

Residues 12 to 22 (PYANGPLHLGH) carry the 'HIGH' region motif. The Zn(2+) site is built by C143, C146, C156, and C159. Positions 330-334 (KMSKS) match the 'KMSKS' region motif. K333 is an ATP binding site. A compositionally biased stretch (low complexity) spans 550-575 (LAAPAAPATTSKAAPAKPDTKPAAAA). Residues 550 to 580 (LAAPAAPATTSKAAPAKPDTKPAAAANPQSP) are disordered. The tRNA-binding domain occupies 591-694 (DFAKLDLRIG…SGAQPGMPVR (104 aa)).

The protein belongs to the class-I aminoacyl-tRNA synthetase family. MetG type 1 subfamily. Homodimer. Requires Zn(2+) as cofactor.

The protein localises to the cytoplasm. It catalyses the reaction tRNA(Met) + L-methionine + ATP = L-methionyl-tRNA(Met) + AMP + diphosphate. Is required not only for elongation of protein synthesis but also for the initiation of all mRNA translation through initiator tRNA(fMet) aminoacylation. The protein is Methionine--tRNA ligase of Xanthomonas oryzae pv. oryzae (strain MAFF 311018).